A 468-amino-acid polypeptide reads, in one-letter code: Ubiquinone biosynthesis monooxygenase COQ6, mitochondrial (468 aa).

The N-terminal 28 residues, 1 to 28 (MAARLVSRCGAVRAAPHSGPLVSWRRWS), are a transit peptide targeting the mitochondrion.

Belongs to the UbiH/COQ6 family. In terms of assembly, component of a multi-subunit COQ enzyme complex, composed of at least COQ3, COQ4, COQ5, COQ6, COQ7 and COQ9. Interacts with COQ8B and COQ7. It depends on FAD as a cofactor. In terms of tissue distribution, widely expressed.

It is found in the mitochondrion inner membrane. It localises to the golgi apparatus. The protein localises to the cell projection. It carries out the reaction 4-hydroxy-3-(all-trans-decaprenyl)benzoate + 2 reduced [2Fe-2S]-[ferredoxin] + O2 + 2 H(+) = 3,4-dihydroxy-5-(all-trans-decaprenyl)benzoate + 2 oxidized [2Fe-2S]-[ferredoxin] + H2O. It catalyses the reaction 2-methoxy-6-(all-trans-decaprenyl)phenol + 2 reduced [2Fe-2S]-[ferredoxin] + O2 + 2 H(+) = 2-methoxy-6-(all-trans-decaprenyl)benzene-1,4-diol + 2 oxidized [2Fe-2S]-[ferredoxin] + H2O. It functions in the pathway cofactor biosynthesis; ubiquinone biosynthesis. Functionally, FAD-dependent monooxygenase required for two non-consecutive steps during ubiquinone biosynthesis. Required for the C5-ring hydroxylation during ubiquinone biosynthesis by catalyzing the hydroxylation of 4-hydroxy-3-(all-trans-decaprenyl)benzoic acid to 3,4-dihydroxy-5-(all-trans-decaprenyl)benzoic acid. Also acts downstream of COQ4, for the C1-hydroxylation during ubiquinone biosynthesis by catalyzing the hydroxylation of 2-methoxy-6-(all-trans-decaprenyl)phenol to 2-methoxy-6-(all-trans-decaprenyl)benzene-1,4-diol. The electrons required for the hydroxylation reaction are funneled indirectly to COQ6 from NADPH via a ferredoxin/ferredoxin reductase system composed of FDX2 and FDXR. In Homo sapiens (Human), this protein is Ubiquinone biosynthesis monooxygenase COQ6, mitochondrial.